A 123-amino-acid polypeptide reads, in one-letter code: Large ribosomal subunit protein uL14c (123 aa).

Belongs to the universal ribosomal protein uL14 family. Part of the 50S ribosomal subunit.

Its subcellular location is the plastid. It localises to the chloroplast. Its function is as follows. Binds to 23S rRNA. The protein is Large ribosomal subunit protein uL14c of Lolium perenne (Perennial ryegrass).